Consider the following 291-residue polypeptide: Transmembrane protein 41B (291 aa).

The segment at 1-38 (MAKGRVAERSQMGADHTTPVGDGAAGTRGPAAPGSRDY) is disordered. A Phosphothreonine modification is found at T18. Residues 21–34 (GDGAAGTRGPAAPG) show a composition bias toward low complexity. S35 bears the Phosphoserine mark. 6 consecutive transmembrane segments (helical) span residues 52–72 (MSLL…FLVY), 109–129 (FYVQ…TFAI), 147–169 (LALF…LSYL), 197–217 (LINY…FINI), 225–245 (PLKV…FVAI), and 262–282 (SWNS…PAIF). The VTT domain; required for its function in autophagy stretch occupies residues 140-251 (GFLYPFPLAL…FVAIKAGTTL (112 aa)).

It belongs to the TMEM41 family. As to quaternary structure, interacts with VMP1. Interacts with COPA, COPB1, VDAC1 and ERLIN2. Interacts with ATG2A. Interacts with SURF4.

It localises to the endoplasmic reticulum membrane. The protein resides in the endomembrane system. The enzyme catalyses a 1,2-diacyl-sn-glycero-3-phospho-L-serine(in) = a 1,2-diacyl-sn-glycero-3-phospho-L-serine(out). It catalyses the reaction cholesterol(in) = cholesterol(out). The catalysed reaction is a 1,2-diacyl-sn-glycero-3-phosphocholine(in) = a 1,2-diacyl-sn-glycero-3-phosphocholine(out). It carries out the reaction a 1,2-diacyl-sn-glycero-3-phosphoethanolamine(in) = a 1,2-diacyl-sn-glycero-3-phosphoethanolamine(out). Functionally, phospholipid scramblase involved in lipid homeostasis and membrane dynamics processes. Has phospholipid scramblase activity toward cholesterol and phosphatidylserine, as well as phosphatidylethanolamine and phosphatidylcholine. Required for autophagosome formation: participates in early stages of autophagosome biogenesis at the endoplasmic reticulum (ER) membrane by reequilibrating the leaflets of the ER as lipids are extracted by ATG2 (ATG2A or ATG2B) to mediate autophagosome assembly. In addition to autophagy, involved in other processes in which phospholipid scramblase activity is required. Required for normal motor neuron development. In Pongo abelii (Sumatran orangutan), this protein is Transmembrane protein 41B.